The following is a 475-amino-acid chain: Probable proline--tRNA ligase, mitochondrial (475 aa).

The transit peptide at 1–29 (MEGLLTRCRTLSALAACSLRHCRYIIHKC) directs the protein to the mitochondrion.

The protein belongs to the class-II aminoacyl-tRNA synthetase family.

It is found in the mitochondrion matrix. It carries out the reaction tRNA(Pro) + L-proline + ATP = L-prolyl-tRNA(Pro) + AMP + diphosphate. Mitochondrial aminoacyl-tRNA synthetase that catalyzes the specific attachment of the proline amino acid (aa) to the homologous transfer RNA (tRNA), further participating in protein synthesis. The reaction occurs in a two steps: proline is first activated by ATP to form Pro-AMP and then transferred to the acceptor end of tRNA(Pro). This Mus musculus (Mouse) protein is Probable proline--tRNA ligase, mitochondrial (Pars2).